Reading from the N-terminus, the 606-residue chain is Pyruvate decarboxylase 2 (606 aa).

Residues Asp68 and His155 each contribute to the substrate site. The tract at residues 433–515 (DSWFNCQKLK…FLINNGGYTI (83 aa)) is thiamine pyrophosphate binding. 3 residues coordinate Mg(2+): Asp483, Asn510, and Gly512. Residue Glu516 coordinates substrate.

The protein belongs to the TPP enzyme family. In terms of assembly, homotetramer. A metal cation is required as a cofactor. The cofactor is thiamine diphosphate.

It catalyses the reaction a 2-oxocarboxylate + H(+) = an aldehyde + CO2. In Oryza sativa subsp. indica (Rice), this protein is Pyruvate decarboxylase 2 (PDC2).